The primary structure comprises 257 residues: Thioredoxin-dependent peroxide reductase, mitochondrial (257 aa).

The transit peptide at M1–H62 directs the protein to the mitochondrion. One can recognise a Thioredoxin domain in the interval P64–F222. Position 84 is an N6-succinyllysine (K84). K92 is modified (N6-acetyllysine; alternate). K92 carries the post-translational modification N6-succinyllysine; alternate. The active-site Cysteine sulfenic acid (-SOH) intermediate is C109. T147 bears the Phosphothreonine mark.

This sequence belongs to the peroxiredoxin family. AhpC/Prx1 subfamily. In terms of assembly, homodimer; disulfide-linked, upon oxidation. 6 homodimers assemble to form a ring-like dodecamer. Interacts with NEK6. Interacts with LRRK2. Interacts with MAP3K13. Interacts with RPS6KC1 (via PX domain). Phosphorylated by LRRK2; phosphorylation reduces perodixase activity. Post-translationally, the enzyme can be inactivated by further oxidation of the cysteine sulfenic acid (C(P)-SOH) to sulphinic acid (C(P)-SO2H) and sulphonic acid (C(P)-SO3H) instead of its condensation to a disulfide bond. In terms of processing, S-palmitoylated. In terms of tissue distribution, housekeeping-type gene preferentially expressed in murine erythroleukemia (MEL) cells.

It is found in the mitochondrion. The protein resides in the cytoplasm. Its subcellular location is the early endosome. It catalyses the reaction a hydroperoxide + [thioredoxin]-dithiol = an alcohol + [thioredoxin]-disulfide + H2O. In terms of biological role, thiol-specific peroxidase that catalyzes the reduction of hydrogen peroxide and organic hydroperoxides to water and alcohols, respectively. Plays a role in cell protection against oxidative stress by detoxifying peroxides. Acts synergistically with MAP3K13 to regulate the activation of NF-kappa-B in the cytosol. Required for the maintenance of physical strength. The protein is Thioredoxin-dependent peroxide reductase, mitochondrial (Prdx3) of Mus musculus (Mouse).